Here is a 325-residue protein sequence, read N- to C-terminus: MNALTAVQNNAVDSGQDYSGFTLTPSAQSPRLLELTFTEQTTKQFLEQVAEWPVQALEYKSFLRFRVAKILDDLCANQLQPLLLKTLLNRAEGALLINAVGVDDVKQADEMVKLATAVAHLIGRSNFDAMSGQYYARFVVKNVDNSDSYLRQPHRVMELHNDGTYVEEITDYVLMMKIDEQNMQGGNSLLLHLDDWEHLDNYFRHPLARRPMRFAAPPSKNVSKDVFHPVFDVDQQGRPVMRYIDQFVQPKDFEEGVWLSELSDAIETSKGILSVPVPVGKFLLINNLFWLHGRDRFTPHPDLRRELMRQRGYFAYASNHYQTHQ.

The Fe cation site is built by histidine 160, aspartate 162, and histidine 292.

Belongs to the glutarate hydroxylase family. In terms of assembly, homotetramer. Fe(2+) is required as a cofactor.

The enzyme catalyses glutarate + 2-oxoglutarate + O2 = (S)-2-hydroxyglutarate + succinate + CO2. Its pathway is amino-acid degradation. In terms of biological role, acts as an alpha-ketoglutarate-dependent dioxygenase catalyzing hydroxylation of glutarate (GA) to L-2-hydroxyglutarate (L2HG). Functions in a L-lysine degradation pathway that proceeds via cadaverine, glutarate and L-2-hydroxyglutarate. This is Glutarate 2-hydroxylase from Escherichia coli (strain K12 / MC4100 / BW2952).